Consider the following 349-residue polypeptide: Histidinol-phosphate aminotransferase (349 aa).

The disordered stretch occupies residues 1–22 (MVSIRPSVRHTPAYVPGEQPQT). Lys-207 is subject to N6-(pyridoxal phosphate)lysine.

Belongs to the class-II pyridoxal-phosphate-dependent aminotransferase family. Histidinol-phosphate aminotransferase subfamily. In terms of assembly, homodimer. Pyridoxal 5'-phosphate serves as cofactor.

The enzyme catalyses L-histidinol phosphate + 2-oxoglutarate = 3-(imidazol-4-yl)-2-oxopropyl phosphate + L-glutamate. The protein operates within amino-acid biosynthesis; L-histidine biosynthesis; L-histidine from 5-phospho-alpha-D-ribose 1-diphosphate: step 7/9. This chain is Histidinol-phosphate aminotransferase (hisC), found in Synechocystis sp. (strain ATCC 27184 / PCC 6803 / Kazusa).